Here is a 542-residue protein sequence, read N- to C-terminus: Zinc finger CCHC domain-containing protein 7 (542 aa).

A disordered region spans residues 110-144; sequence QAQEKTQSPATPRSNKVANKCKRSNKKPEPEESPS. Positions 112–126 are enriched in polar residues; it reads QEKTQSPATPRSNKV. Glycyl lysine isopeptide (Lys-Gly) (interchain with G-Cter in SUMO2) cross-links involve residues lysine 129 and lysine 136. Phosphoserine is present on serine 142. Glycyl lysine isopeptide (Lys-Gly) (interchain with G-Cter in SUMO2) cross-links involve residues lysine 236 and lysine 251. 3 CCHC-type zinc fingers span residues 238 to 255, 260 to 277, and 301 to 318; these read VTCR…NCPL, RPCC…GCPA, and KRCD…ACPE. A Glycyl lysine isopeptide (Lys-Gly) (interchain with G-Cter in SUMO2) cross-link involves residue lysine 336. The CCHC-type 4 zinc finger occupies 345 to 362; it reads VYCYNCAQKGHYGHECTE. Residues 396 to 542 are disordered; sequence LKDIKKNGDF…RKKKPKSSGF (147 aa). Lysine 410 participates in a covalent cross-link: Glycyl lysine isopeptide (Lys-Gly) (interchain with G-Cter in SUMO2). The segment covering 412–421 has biased composition (basic and acidic residues); it reads PHGEETDRYH. Residues 422 to 435 are compositionally biased toward basic residues; the sequence is HDRRKSRFSGKRSR. A Glycyl lysine isopeptide (Lys-Gly) (interchain with G-Cter in SUMO2) cross-link involves residue lysine 432. A compositionally biased stretch (basic and acidic residues) spans 436 to 456; sequence WPRESKETQKEKTRGREGEKH. A Glycyl lysine isopeptide (Lys-Gly) (interchain with G-Cter in SUMO2) cross-link involves residue lysine 474. Residues 474–489 show a composition bias toward low complexity; it reads KPNSSSSSNSQKPSKS. A phosphoserine mark is found at serine 478 and serine 480. Glycyl lysine isopeptide (Lys-Gly) (interchain with G-Cter in SUMO2) cross-links involve residues lysine 485 and lysine 488. Basic and acidic residues-rich tracts occupy residues 499-510 and 518-528; these read LREEKLRRESMR and FVEDGSHDDLF. Lysine 531 participates in a covalent cross-link: Glycyl lysine isopeptide (Lys-Gly) (interchain with G-Cter in SUMO2). Positions 531–542 are enriched in basic residues; the sequence is KQRKKKPKSSGF.

Component of a nucleolar TRAMP-like complex, an ATP-dependent exosome regulatory complex consisting of a helicase (MTREX), an oligadenylate polymerase (TENT4B or TENT4A), and a substrate specific RNA-binding factor (ZCCHC7 or ZCCHC8). Several TRAMP-like complexes exist with specific compositions and are associated with nuclear, or nucleolar RNA exosomes.

Its subcellular location is the nucleus. The protein localises to the nucleolus. The polypeptide is Zinc finger CCHC domain-containing protein 7 (Zcchc7) (Rattus norvegicus (Rat)).